The chain runs to 822 residues: Serine/threonine-protein kinase kin-29 (822 aa).

The 252-residue stretch at 16–267 folds into the Protein kinase domain; it reads YDVGRAIGKG…IQNVLQHRWM (252 aa). Residues 22 to 30 and Lys-45 contribute to the ATP site; that span reads IGKGNFATV. The active-site Proton acceptor is Asp-138. Disordered stretches follow at residues 348–367, 389–423, and 577–602; these read EGTG…LSGK, LSSP…RQFG, and NPIP…WASP. Residues 394–406 show a composition bias toward acidic residues; sequence CDSDDSSNSDLCD.

Belongs to the protein kinase superfamily. CAMK Ser/Thr protein kinase family. SNF1 subfamily. In terms of assembly, interacts with tax-6. Requires Mg(2+) as cofactor. Autophosphorylated. Elevated cAMP levels appears to act via PKA to directly or indirectly phosphorylate multiple sites on kin-29 and inhibit function. In terms of tissue distribution, primarily neuronal, with additional expression in body wall muscle and hypodermal cells. Among neuronal cells, expressed in multiple sensory neurons and interneurons in the lateral, anterior, and lumbar ganglia, as well as in motor neurons in the ventral motor cord. Present in the AWB and AWC olfactory neurons.

It is found in the cytoplasm. It localises to the nucleus. The enzyme catalyses L-seryl-[protein] + ATP = O-phospho-L-seryl-[protein] + ADP + H(+). It catalyses the reaction L-threonyl-[protein] + ATP = O-phospho-L-threonyl-[protein] + ADP + H(+). In terms of biological role, regulates chemoreceptor expression by phosphorylating the hda-4 class II histone deacetylase (HDAC) and inhibiting the gene repression functions of hda-4 and the mef-2 transcription factor, enabling the correct sensing and transduction of food signals. Role in determining body size, the dauer decision and serotonin-mediated egg laying. May modulate the Sma/Mab pathway and regulates development in the later larval stages. The polypeptide is Serine/threonine-protein kinase kin-29 (Caenorhabditis elegans).